The following is a 493-amino-acid chain: Bifunctional protein GlmU (493 aa).

The pyrophosphorylase stretch occupies residues methionine 1–arginine 246. Residues leucine 21–glycine 24, lysine 35, glutamine 88, glycine 93–threonine 94, serine 117–aspartate 119, glycine 156, glutamate 171, asparagine 186, and asparagine 244 each bind UDP-N-acetyl-alpha-D-glucosamine. Residue aspartate 119 coordinates Mg(2+). A Mg(2+)-binding site is contributed by asparagine 244. Residues valine 247 to alanine 267 are linker. An N-acetyltransferase region spans residues glycine 268–alanine 493. Residues arginine 349 and lysine 367 each coordinate UDP-N-acetyl-alpha-D-glucosamine. Residue histidine 379 is the Proton acceptor of the active site. The UDP-N-acetyl-alpha-D-glucosamine site is built by tyrosine 382 and asparagine 393. Residues alanine 396, asparagine 402–tyrosine 403, serine 421, and alanine 439 each bind acetyl-CoA. Residues arginine 470–alanine 493 are disordered.

The protein in the N-terminal section; belongs to the N-acetylglucosamine-1-phosphate uridyltransferase family. This sequence in the C-terminal section; belongs to the transferase hexapeptide repeat family. Homotrimer. Mg(2+) is required as a cofactor.

Its subcellular location is the cytoplasm. It carries out the reaction alpha-D-glucosamine 1-phosphate + acetyl-CoA = N-acetyl-alpha-D-glucosamine 1-phosphate + CoA + H(+). The enzyme catalyses N-acetyl-alpha-D-glucosamine 1-phosphate + UTP + H(+) = UDP-N-acetyl-alpha-D-glucosamine + diphosphate. The protein operates within nucleotide-sugar biosynthesis; UDP-N-acetyl-alpha-D-glucosamine biosynthesis; N-acetyl-alpha-D-glucosamine 1-phosphate from alpha-D-glucosamine 6-phosphate (route II): step 2/2. It participates in nucleotide-sugar biosynthesis; UDP-N-acetyl-alpha-D-glucosamine biosynthesis; UDP-N-acetyl-alpha-D-glucosamine from N-acetyl-alpha-D-glucosamine 1-phosphate: step 1/1. Its pathway is bacterial outer membrane biogenesis; LPS lipid A biosynthesis. Its function is as follows. Catalyzes the last two sequential reactions in the de novo biosynthetic pathway for UDP-N-acetylglucosamine (UDP-GlcNAc). The C-terminal domain catalyzes the transfer of acetyl group from acetyl coenzyme A to glucosamine-1-phosphate (GlcN-1-P) to produce N-acetylglucosamine-1-phosphate (GlcNAc-1-P), which is converted into UDP-GlcNAc by the transfer of uridine 5-monophosphate (from uridine 5-triphosphate), a reaction catalyzed by the N-terminal domain. This Clavibacter sepedonicus (Clavibacter michiganensis subsp. sepedonicus) protein is Bifunctional protein GlmU.